The following is a 101-amino-acid chain: Urease subunit beta (101 aa).

The protein belongs to the urease beta subunit family. Heterotrimer of UreA (gamma), UreB (beta) and UreC (alpha) subunits. Three heterotrimers associate to form the active enzyme.

It is found in the cytoplasm. It catalyses the reaction urea + 2 H2O + H(+) = hydrogencarbonate + 2 NH4(+). It functions in the pathway nitrogen metabolism; urea degradation; CO(2) and NH(3) from urea (urease route): step 1/1. The sequence is that of Urease subunit beta from Paraburkholderia phytofirmans (strain DSM 17436 / LMG 22146 / PsJN) (Burkholderia phytofirmans).